The sequence spans 306 residues: UDP-N-acetylenolpyruvoylglucosamine reductase (306 aa).

Positions 34–198 (VGGPADLLIT…LEVTFKLHNS (165 aa)) constitute an FAD-binding PCMH-type domain. Arg-177 is an active-site residue. Ser-227 acts as the Proton donor in catalysis. Residue Glu-297 is part of the active site.

It belongs to the MurB family. FAD is required as a cofactor.

The protein localises to the cytoplasm. It carries out the reaction UDP-N-acetyl-alpha-D-muramate + NADP(+) = UDP-N-acetyl-3-O-(1-carboxyvinyl)-alpha-D-glucosamine + NADPH + H(+). The protein operates within cell wall biogenesis; peptidoglycan biosynthesis. Its function is as follows. Cell wall formation. The polypeptide is UDP-N-acetylenolpyruvoylglucosamine reductase (Clostridium botulinum (strain Okra / Type B1)).